A 108-amino-acid chain; its full sequence is Replication initiation control protein YabA (108 aa).

4 residues coordinate Zn(2+): histidine 83, cysteine 85, cysteine 99, and cysteine 102.

It belongs to the YabA family. In terms of assembly, homotetramer. Interacts with both DnaA and DnaN, acting as a bridge between these two proteins. Requires Zn(2+) as cofactor.

Its subcellular location is the cytoplasm. It localises to the nucleoid. Functionally, involved in control of chromosome replication initiation. Inhibits the cooperative binding of DnaA to the oriC region, thus negatively regulating initiation of chromosome replication. Inhibits the ability of DnaA-ATP to form a helix on DNA; does not disassemble preformed DnaA-DNA helices. Decreases the residence time of DnaA on the chromosome at its binding sites (oriC, replication forks and promoter-binding sites). Tethers DnaA to the replication machinery via the DNA polymerase beta sliding clamp subunit (dnaN). Associates with oriC and other DnaA targets on the chromosome in a DnaA-dependent manner. This chain is Replication initiation control protein YabA, found in Lactococcus lactis subsp. cremoris (strain SK11).